A 34-amino-acid chain; its full sequence is Photosystem II reaction center protein M (34 aa).

A helical transmembrane segment spans residues 5-25 (ILAFIATALFILVPTAFLLII).

This sequence belongs to the PsbM family. PSII is composed of 1 copy each of membrane proteins PsbA, PsbB, PsbC, PsbD, PsbE, PsbF, PsbH, PsbI, PsbJ, PsbK, PsbL, PsbM, PsbT, PsbX, PsbY, PsbZ, Psb30/Ycf12, at least 3 peripheral proteins of the oxygen-evolving complex and a large number of cofactors. It forms dimeric complexes.

The protein localises to the plastid. It is found in the chloroplast thylakoid membrane. Its function is as follows. One of the components of the core complex of photosystem II (PSII). PSII is a light-driven water:plastoquinone oxidoreductase that uses light energy to abstract electrons from H(2)O, generating O(2) and a proton gradient subsequently used for ATP formation. It consists of a core antenna complex that captures photons, and an electron transfer chain that converts photonic excitation into a charge separation. This subunit is found at the monomer-monomer interface. The protein is Photosystem II reaction center protein M of Cenchrus americanus (Pearl millet).